The primary structure comprises 239 residues: Lipoprotein-releasing system ATP-binding protein LolD (239 aa).

In terms of domain architecture, ABC transporter spans Val-10–Ala-239. Residue Gly-46–Ser-53 participates in ATP binding.

The protein belongs to the ABC transporter superfamily. Lipoprotein translocase (TC 3.A.1.125) family. The complex is composed of two ATP-binding proteins (LolD) and two transmembrane proteins (LolC and LolE).

The protein resides in the cell inner membrane. In terms of biological role, part of the ABC transporter complex LolCDE involved in the translocation of mature outer membrane-directed lipoproteins, from the inner membrane to the periplasmic chaperone, LolA. Responsible for the formation of the LolA-lipoprotein complex in an ATP-dependent manner. The chain is Lipoprotein-releasing system ATP-binding protein LolD from Anaeromyxobacter dehalogenans (strain 2CP-C).